A 256-amino-acid chain; its full sequence is GTP cyclohydrolase FolE2 (256 aa).

The protein belongs to the GTP cyclohydrolase IV family.

The catalysed reaction is GTP + H2O = 7,8-dihydroneopterin 3'-triphosphate + formate + H(+). Its pathway is cofactor biosynthesis; 7,8-dihydroneopterin triphosphate biosynthesis; 7,8-dihydroneopterin triphosphate from GTP: step 1/1. Its function is as follows. Converts GTP to 7,8-dihydroneopterin triphosphate. The polypeptide is GTP cyclohydrolase FolE2 (Maridesulfovibrio salexigens (strain ATCC 14822 / DSM 2638 / NCIMB 8403 / VKM B-1763) (Desulfovibrio salexigens)).